The primary structure comprises 324 residues: MKNVAIVSGGYSSECVISLKSAEEVYLSIDKTRYNPYIVLITRNGWTVQGGNKTEFPINKNDFSFIYKGKQIRFDFAYIIIHGTPGEDGLLQGYLDILNIPYSCCGVLSASITFNKYFCNNYLRGFGVETAKSILLKQREQIISPERIIDKLGLPLIVKPNDGGSSFGVTKVTNITQIQLAIRNAFNEGEGVLIESFIPGTEITCGYYKTKNKQVTLPITEIISKNDFFDFEAKYNPGMVEEITPARISKKLTDEIQTLTAHIYDWVGAKGIIRIDYIISPKKEIKMLEVNTIPGMTATSFIPQQIRAAGLNLKEILTEIIESI.

One can recognise an ATP-grasp domain in the interval 120-322 (NNYLRGFGVE…LKEILTEIIE (203 aa)). An ATP-binding site is contributed by 149-204 (IDKLGLPLIVKPNDGGSSFGVTKVTNITQIQLAIRNAFNEGEGVLIESFIPGTEIT). Residues aspartate 276, glutamate 289, and asparagine 291 each coordinate Mg(2+).

It belongs to the D-alanine--D-alanine ligase family. It depends on Mg(2+) as a cofactor. Mn(2+) is required as a cofactor.

It localises to the cytoplasm. It catalyses the reaction 2 D-alanine + ATP = D-alanyl-D-alanine + ADP + phosphate + H(+). It participates in cell wall biogenesis; peptidoglycan biosynthesis. In terms of biological role, cell wall formation. The protein is D-alanine--D-alanine ligase of Azobacteroides pseudotrichonymphae genomovar. CFP2.